A 447-amino-acid chain; its full sequence is Putative branched-chain amino acid carrier protein SAR1419 (447 aa).

Transmembrane regions (helical) follow at residues 6 to 26 (WVIGFTLFAMFFGAGNLIFPP), 40 to 60 (ILAFVLTGIGLPLLGVIVGAL), 74 to 94 (PKFSILFLIIIYLTIGPLFAI), 114 to 134 (SSIALFIFTIIYFIVVLYICL), 143 to 163 (IGSLLTPLLLITILAMIIKAY), 193 to 213 (GYLTMDAIAAIAFSMIVVNAV), 229 to 249 (LTAGLIAAIALIFIYISLGYI), 290 to 310 (LLGIIVALACLTTACGLIVAV), 326 to 346 (FVLVFILMSFIIANQGLNAVI), 350 to 370 (IPVLSIVYPVAITVVLLILIA), 382 to 402 (IPVIIVFILSIFSVISKLGWL), and 417 to 437 (LEWFPVAIIATILGYLVGIFV).

It belongs to the branched chain amino acid transporter family.

It localises to the cell membrane. In terms of biological role, component of the transport system for branched-chain amino acids (leucine, isoleucine and valine), which is coupled to a proton motive force (Potential). Contributes to NaCl tolerance. The sequence is that of Putative branched-chain amino acid carrier protein SAR1419 from Staphylococcus aureus (strain MRSA252).